A 138-amino-acid chain; its full sequence is Histone H3-like centromeric protein A (138 aa).

Positions 1 to 40 are disordered; the sequence is MGPRRQKRKPETPRRRPASPAPAAPRPTPSLGTSSRPLAR. At Gly2 the chain carries N,N,N-trimethylglycine. Ser19 carries the phosphoserine modification. Positions 19 to 28 are enriched in pro residues; it reads SPAPAAPRPT. The important for flexibility of DNA ends that protrude from nucleosomes stretch occupies residues 37-52; sequence PLARRRHTVLKEIRTL. An H3-like region spans residues 39–138; that stretch reads ARRRHTVLKE…RIRGIQEGLG (100 aa). The tract at residues 73-114 is CATD; the sequence is CVQFTRGVDFNWQAQALLALQEAAEAFLVHLFEDAYLLSLHA.

It belongs to the histone H3 family. In terms of assembly, component of centromeric nucleosomes, where DNA is wrapped around a histone octamer core. The octamer contains two molecules each of H2A, H2B, CENPA and H4 assembled in one CENPA-H4 heterotetramer and two H2A-H2B heterodimers. CENPA modulates the DNA-binding characteristics of nucleosomes so that protruding DNA ends have higher flexibility than in nucleosomes containing conventional histone H3. Inhibits binding of histone H1 to nucleosomes, since histone H1 binds preferentially to rigid DNA linkers that protrude from nucleosomes. Nucleosomes containing CENPA also contain histone H2A variants such as MACROH2A and H2A.Z/H2AZ1. The CENPA-H4 heterotetramer is more compact and structurally more rigid than corresponding H3-H4 heterotetramers. Can assemble into nucleosomes that contain both CENPA and histone H3.3; these nucleosomes interact with a single CENPC chain. Heterotrimer composed of HJURP, CENPA and histone H4, where HJURP interacts with the dimer formed by CENPA and histone H4 and prevents tetramerization of CENPA and H4. Component of the CENPA-NAC complex, at least composed of CENPA, CENPC, CENPH, CENPM, CENPN, CENPT and CENPU. Interacts (via CATD domain) with HJURP; the interaction is direct and is required for its localization to centromeres. Interacts with CENPC, CENPN and CENPT; interaction is direct. Part of a centromere complex consisting of CENPA, CENPT and CENPW. Identified in centromere complexes containing histones H2A, H2B and H4, and at least CENPA, CENPB, CENPC, CENPT, CENPN, HJURP, SUPT16H, SSRP1 and RSF1. Can self-associate. The CENPA-H4 heterotetramer can bind DNA by itself (in vitro). Interacts with CDK1, PPP1CA and RBBP7. Trimethylated by NTMT1 at the N-terminal glycine after cleavage of Met-1. Methylation is low before incorporation into nucleosomes and increases with cell cycle progression, with the highest levels in mitotic nucleosomes. In terms of processing, poly-ADP-ribosylated by PARP1.

Its subcellular location is the nucleus. It is found in the chromosome. It localises to the centromere. Histone H3-like nucleosomal protein that is specifically found in centromeric nucleosomes. Replaces conventional H3 in the nucleosome core of centromeric chromatin that serves as an assembly site for the inner kinetochore. The presence of CENPA subtly modifies the nucleosome structure and the way DNA is wrapped around the nucleosome and gives rise to protruding DNA ends that are less well-ordered and rigid compared to nucleosomes containing histone H3. May serve as an epigenetic mark that propagates centromere identity through replication and cell division. Required for recruitment and assembly of kinetochore proteins, and as a consequence required for progress through mitosis, chromosome segregation and cytokinesis. The chain is Histone H3-like centromeric protein A (CENPA) from Bos taurus (Bovine).